Consider the following 140-residue polypeptide: uncharacterized protein (140 aa).

The interval 34–88 (PLRWRNRARNREKPHSPRAVSSPATHSLPPSNPCRLTPTLSSARPREGSCPSKCS) is disordered.

In terms of tissue distribution, expressed in a range of cell lines, including B-cell lymphoma and prostate.

This is an uncharacterized protein from Homo sapiens (Human).